The following is a 335-amino-acid chain: Putative D-threonate 4-phosphate dehydrogenase (335 aa).

The substrate site is built by His-140 and Thr-141. His-170, His-214, and His-269 together coordinate a divalent metal cation. The substrate site is built by Lys-277 and Arg-295.

This sequence belongs to the PdxA family. PdxA2 subfamily. In terms of assembly, homodimer. The cofactor is a divalent metal cation.

It carries out the reaction 4-O-phospho-D-threonate + NAD(+) = dihydroxyacetone phosphate + CO2 + NADH. Its function is as follows. Catalyzes the NAD-dependent oxidation and subsequent decarboxylation of D-threonate 4-phosphate to produce dihydroxyacetone phosphate (DHAP). In Symbiobacterium thermophilum (strain DSM 24528 / JCM 14929 / IAM 14863 / T), this protein is Putative D-threonate 4-phosphate dehydrogenase.